The following is an 824-amino-acid chain: Molybdenum cofactor sulfurase (824 aa).

The residue at position 274 (Lys274) is an N6-(pyridoxal phosphate)lysine. Cys433 is an active-site residue. In terms of domain architecture, MOSC spans 655–822 (CSSSKYRSCT…LQVGQQVYPS (168 aa)).

Belongs to the class-V pyridoxal-phosphate-dependent aminotransferase family. MOCOS subfamily. The cofactor is pyridoxal 5'-phosphate.

The enzyme catalyses Mo-molybdopterin + L-cysteine + AH2 = thio-Mo-molybdopterin + L-alanine + A + H2O. It functions in the pathway cofactor biosynthesis; molybdopterin biosynthesis. Sulfurates the molybdenum cofactor. Sulfation of molybdenum is essential for xanthine dehydrogenase (XDH) and aldehyde oxidase (ADO) enzymes in which molybdenum cofactor is liganded by 1 oxygen and 1 sulfur atom in active form. This Oryza sativa subsp. japonica (Rice) protein is Molybdenum cofactor sulfurase (MCSU3).